The chain runs to 289 residues: ATP synthase gamma chain (289 aa).

It belongs to the ATPase gamma chain family. In terms of assembly, F-type ATPases have 2 components, CF(1) - the catalytic core - and CF(0) - the membrane proton channel. CF(1) has five subunits: alpha(3), beta(3), gamma(1), delta(1), epsilon(1). CF(0) has three main subunits: a, b and c.

The protein localises to the cell inner membrane. Functionally, produces ATP from ADP in the presence of a proton gradient across the membrane. The gamma chain is believed to be important in regulating ATPase activity and the flow of protons through the CF(0) complex. The sequence is that of ATP synthase gamma chain from Histophilus somni (strain 129Pt) (Haemophilus somnus).